The sequence spans 190 residues: Somatotropin (190 aa).

H19 serves as a coordination point for Zn(2+). A disulfide bond links C52 and C163. The residue at position 105 (S105) is a Phosphoserine. E172 lines the Zn(2+) pocket. The cysteines at positions 180 and 188 are disulfide-linked.

Belongs to the somatotropin/prolactin family.

The protein resides in the secreted. In terms of biological role, plays an important role in growth control. Its major role in stimulating body growth is to stimulate the liver and other tissues to secrete IGF1. It stimulates both the differentiation and proliferation of myoblasts. It also stimulates amino acid uptake and protein synthesis in muscle and other tissues. The chain is Somatotropin (GH1) from Vulpes vulpes (Red fox).